Reading from the N-terminus, the 369-residue chain is Queuine tRNA-ribosyltransferase (369 aa).

Asp-89 (proton acceptor) is an active-site residue. Residues 89 to 93 (DSGGF), Asp-142, Gln-184, and Gly-211 contribute to the substrate site. The interval 242–248 (GGGSPEL) is RNA binding. Residue Asp-261 is the Nucleophile of the active site. The tract at residues 266-270 (TRIAR) is RNA binding; important for wobble base 34 recognition. Zn(2+) is bound by residues Cys-299, Cys-301, Cys-304, and His-330.

It belongs to the queuine tRNA-ribosyltransferase family. Homodimer. Within each dimer, one monomer is responsible for RNA recognition and catalysis, while the other monomer binds to the replacement base PreQ1. It depends on Zn(2+) as a cofactor.

It carries out the reaction 7-aminomethyl-7-carbaguanine + guanosine(34) in tRNA = 7-aminomethyl-7-carbaguanosine(34) in tRNA + guanine. Its pathway is tRNA modification; tRNA-queuosine biosynthesis. Its function is as follows. Catalyzes the base-exchange of a guanine (G) residue with the queuine precursor 7-aminomethyl-7-deazaguanine (PreQ1) at position 34 (anticodon wobble position) in tRNAs with GU(N) anticodons (tRNA-Asp, -Asn, -His and -Tyr). Catalysis occurs through a double-displacement mechanism. The nucleophile active site attacks the C1' of nucleotide 34 to detach the guanine base from the RNA, forming a covalent enzyme-RNA intermediate. The proton acceptor active site deprotonates the incoming PreQ1, allowing a nucleophilic attack on the C1' of the ribose to form the product. After dissociation, two additional enzymatic reactions on the tRNA convert PreQ1 to queuine (Q), resulting in the hypermodified nucleoside queuosine (7-(((4,5-cis-dihydroxy-2-cyclopenten-1-yl)amino)methyl)-7-deazaguanosine). The protein is Queuine tRNA-ribosyltransferase of Thermotoga maritima (strain ATCC 43589 / DSM 3109 / JCM 10099 / NBRC 100826 / MSB8).